Here is a 536-residue protein sequence, read N- to C-terminus: ADP,ATP carrier protein 4 (536 aa).

Transmembrane regions (helical) follow at residues V44–L64, S77–V97, M109–W129, T172–A194, K205–T225, F244–F264, V309–L329, A349–I369, and A378–F398. N-linked (GlcNAc...) asparagine glycosylation is found at N400 and N421. 2 helical membrane-spanning segments follow: residues L465–F485 and V493–L513.

Belongs to the ADP/ATP translocase tlc family.

The protein resides in the cell membrane. Its function is as follows. ATP transporter involved in the uptake of ATP from the host cell cytoplasm. Provides the microsporidian cell with host ATP in exchange for ADP. This is an obligate exchange system. This energy acquiring activity is an important component of microsporidian parasitism. This Encephalitozoon cuniculi (strain GB-M1) (Microsporidian parasite) protein is ADP,ATP carrier protein 4 (NTT4).